A 468-amino-acid chain; its full sequence is Bone morphogenetic protein 3 (468 aa).

Positions 1–22 (MAGARGLLCLWLGYFCLNLAQG) are cleaved as a signal peptide. A propeptide spanning residues 23 to 358 (QRPNLHLPGL…EQTLKKARRK (336 aa)) is cleaved from the precursor. The disordered stretch occupies residues 29–53 (LPGLRETEPSDRATGGSPSPDLRPH). N115, N139, N171, and N216 each carry an N-linked (GlcNAc...) asparagine glycan. A disordered region spans residues 314–349 (RKPYKSLQTQPPEKSRNKKKQRKGSHQKGQTLQFDE). Basic residues predominate over residues 329-339 (RNKKKQRKGSH). A compositionally biased stretch (polar residues) spans 340-349 (QKGQTLQFDE). Intrachain disulfides connect C366/C433, C395/C465, and C399/C467. N-linked (GlcNAc...) asparagine glycosylation is present at N459.

The protein belongs to the TGF-beta family. In terms of assembly, homodimer; disulfide-linked.

It localises to the secreted. In terms of biological role, negatively regulates bone density. Antagonizes the ability of certain osteogenic BMPs to induce osteoprogenitor differentiation and ossification. The sequence is that of Bone morphogenetic protein 3 (Bmp3) from Mus musculus (Mouse).